We begin with the raw amino-acid sequence, 779 residues long: GATOR2 complex protein WDR24 (779 aa).

6 WD repeats span residues 66-106, 112-152, 155-195, 199-239, 243-285, and 289-332; these read SLNF…RNKQ, EHKR…SVST, GQSE…RYER, AHTG…VKEI, QTFA…IPFA, and EHKD…VDRA. Disordered stretches follow at residues 506–526 and 570–590; these read LETN…EGQA and DHPS…VSGS. The C4-type zinc-finger motif lies at 707 to 729; it reads NCSNCKRPMSNKGWICDRCHQCA. Zn(2+) contacts are provided by Cys-708, Cys-711, Cys-722, Cys-725, Cys-732, Cys-735, Cys-746, Cys-749, His-751, His-754, His-757, Cys-768, Cys-772, His-774, and Cys-776. The RING-type; atypical zinc finger occupies 730-779; sequence SVCAVCHHVVKGLFVWCQGCSHGGHLEHVMEWLKQSKHCPAGCGHLCEYT.

The protein belongs to the WD repeat WDR24 family. In terms of assembly, component of the GATOR2 subcomplex, composed of MIOS, SEC13, SEH1L, WDR24 and WDR59. The GATOR2 complex interacts with CASTOR1 and CASTOR2; the interaction is negatively regulated by arginine. The GATOR2 complex interacts with SESN1, SESN2 and SESN3; the interaction is negatively regulated by amino acids.

It is found in the lysosome membrane. It carries out the reaction S-ubiquitinyl-[E2 ubiquitin-conjugating enzyme]-L-cysteine + [acceptor protein]-L-lysine = [E2 ubiquitin-conjugating enzyme]-L-cysteine + N(6)-ubiquitinyl-[acceptor protein]-L-lysine.. It participates in protein modification; protein ubiquitination. The GATOR2 complex is negatively regulated by the upstream amino acid sensors CASTOR1 and SESN2, which sequester the GATOR2 complex in absence of amino acids. In the presence of abundant amino acids, GATOR2 is released from CASTOR1 and SESN2 and activated. Catalytic component of the GATOR2 complex, a multiprotein complex that acts as an activator of the amino acid-sensing branch of the mTORC1 signaling pathway. The GATOR2 complex indirectly activates mTORC1 through the inhibition of the GATOR1 subcomplex. GATOR2 probably acts as an E3 ubiquitin-protein ligase toward GATOR1. In the presence of abundant amino acids, the GATOR2 complex mediates ubiquitination of the NPRL2 core component of the GATOR1 complex, leading to GATOR1 inactivation. In the absence of amino acids, GATOR2 is inhibited, activating the GATOR1 complex. In addition to its role in regulation of the mTORC1 complex, promotes the acidification of lysosomes and facilitates autophagic flux. Within the GATOR2 complex, WDR24 constitutes the catalytic subunit that mediates 'Lys-6'-linked ubiquitination of NPRL2. The chain is GATOR2 complex protein WDR24 from Danio rerio (Zebrafish).